The primary structure comprises 337 residues: DNA-directed RNA polymerase subunit alpha (337 aa).

Residues methionine 1–lysine 233 are alpha N-terminal domain (alpha-NTD). The segment at phenylalanine 249 to tyrosine 337 is alpha C-terminal domain (alpha-CTD).

This sequence belongs to the RNA polymerase alpha chain family. In terms of assembly, homodimer. The RNAP catalytic core consists of 2 alpha, 1 beta, 1 beta' and 1 omega subunit. When a sigma factor is associated with the core the holoenzyme is formed, which can initiate transcription.

The enzyme catalyses RNA(n) + a ribonucleoside 5'-triphosphate = RNA(n+1) + diphosphate. Functionally, DNA-dependent RNA polymerase catalyzes the transcription of DNA into RNA using the four ribonucleoside triphosphates as substrates. The chain is DNA-directed RNA polymerase subunit alpha from Bartonella henselae (strain ATCC 49882 / DSM 28221 / CCUG 30454 / Houston 1) (Rochalimaea henselae).